Reading from the N-terminus, the 306-residue chain is Ribosomal protein L11 methyltransferase (306 aa).

Threonine 152, glycine 179, aspartate 201, and asparagine 243 together coordinate S-adenosyl-L-methionine.

It belongs to the methyltransferase superfamily. PrmA family.

It is found in the cytoplasm. It catalyses the reaction L-lysyl-[protein] + 3 S-adenosyl-L-methionine = N(6),N(6),N(6)-trimethyl-L-lysyl-[protein] + 3 S-adenosyl-L-homocysteine + 3 H(+). In terms of biological role, methylates ribosomal protein L11. The chain is Ribosomal protein L11 methyltransferase from Geobacter sp. (strain M21).